Here is a 302-residue protein sequence, read N- to C-terminus: Protocatechuate 4,5-dioxygenase beta chain (302 aa).

Composed of two subunits (alpha and beta) in a 1:1 ratio. The cofactor is Fe(2+).

The enzyme catalyses 3,4-dihydroxybenzoate + O2 = 4-carboxy-2-hydroxy-cis,cis-muconate 6-semialdehyde + H(+). Its function is as follows. Responsible for the aromatic ring fission of protocatechuate. The protein is Protocatechuate 4,5-dioxygenase beta chain (ligB) of Sphingobium sp. (strain NBRC 103272 / SYK-6).